We begin with the raw amino-acid sequence, 129 residues long: HTH-type transcriptional regulator DdrOP3 (129 aa).

The HTH cro/C1-type domain maps to 7-61 (LRELRQERGLRLKDIAGAAQISVPYLSDLERGRTNPSLETLQSLASTYGITVHDL). The H-T-H motif DNA-binding region spans 18–37 (LKDIAGAAQISVPYLSDLER).

Post-translationally, cleaved between Leu-106 and Arg-107 by the IrrE metalloprotease after exposure to radiation. Cleavage inactivates DdrOP3, leading to derepression of the target genes.

Repressor specific for genes preceded by a radiation/desiccation response motif (RDRM) site, which is present upstream of several radiation-induced genes. In Deinococcus deserti (strain DSM 17065 / CIP 109153 / LMG 22923 / VCD115), this protein is HTH-type transcriptional regulator DdrOP3.